The following is a 299-amino-acid chain: CRISPR-associated endonuclease Cas1 3 (299 aa).

Positions 143, 210, and 223 each coordinate Mn(2+).

It belongs to the CRISPR-associated endonuclease Cas1 family. As to quaternary structure, homodimer, forms a heterotetramer with a Cas2 homodimer. The cofactor is Mg(2+). Mn(2+) is required as a cofactor.

Its function is as follows. CRISPR (clustered regularly interspaced short palindromic repeat), is an adaptive immune system that provides protection against mobile genetic elements (viruses, transposable elements and conjugative plasmids). CRISPR clusters contain spacers, sequences complementary to antecedent mobile elements, and target invading nucleic acids. CRISPR clusters are transcribed and processed into CRISPR RNA (crRNA). Acts as a dsDNA endonuclease. Involved in the integration of spacer DNA into the CRISPR cassette. The sequence is that of CRISPR-associated endonuclease Cas1 3 from Methanospirillum hungatei JF-1 (strain ATCC 27890 / DSM 864 / NBRC 100397 / JF-1).